The following is a 119-amino-acid chain: Large ribosomal subunit protein bL20 (119 aa).

It belongs to the bacterial ribosomal protein bL20 family.

Binds directly to 23S ribosomal RNA and is necessary for the in vitro assembly process of the 50S ribosomal subunit. It is not involved in the protein synthesizing functions of that subunit. The sequence is that of Large ribosomal subunit protein bL20 from Caldanaerobacter subterraneus subsp. tengcongensis (strain DSM 15242 / JCM 11007 / NBRC 100824 / MB4) (Thermoanaerobacter tengcongensis).